The primary structure comprises 358 residues: Ion-translocating oxidoreductase complex subunit D (358 aa).

The next 3 membrane-spanning stretches (helical) occupy residues 24-44 (ILAM…GVVL), 79-99 (LTAL…IIII), and 125-145 (IGYV…MPPI). Threonine 186 carries the post-translational modification FMN phosphoryl threonine. A run of 5 helical transmembrane segments spans residues 220–240 (FAQG…FLIL), 248–268 (IPVA…FTGF), 271–291 (LSAI…FIAT), 297–317 (SITP…VYLI), and 321–341 (GNYP…VPLI).

Belongs to the NqrB/RnfD family. In terms of assembly, the complex is composed of six subunits: RnfA, RnfB, RnfC, RnfD, RnfE and RnfG. FMN is required as a cofactor.

It is found in the cell inner membrane. In terms of biological role, part of a membrane-bound complex that couples electron transfer with translocation of ions across the membrane. In Haemophilus influenzae (strain ATCC 51907 / DSM 11121 / KW20 / Rd), this protein is Ion-translocating oxidoreductase complex subunit D.